The sequence spans 484 residues: Chromosomal replication initiator protein DnaA (484 aa).

Residues 1–73 are domain I, interacts with DnaA modulators; it reads MQEGKNIWSL…EILTEKGHNT (73 aa). The segment at 73 to 140 is domain II; that stretch reads TINVEFINPP…EDIHTKYRNP (68 aa). A domain III, AAA+ region region spans residues 141-357; the sequence is FLKKKYTFEN…AAVTKLKAHI (217 aa). ATP-binding residues include G185, G187, K188, and T189. The domain IV, binds dsDNA stretch occupies residues 358–484; that stretch reads DLEDIEIDTS…IELMNKINKN (127 aa).

This sequence belongs to the DnaA family. As to quaternary structure, oligomerizes as a right-handed, spiral filament on DNA at oriC.

The protein localises to the cytoplasm. Functionally, plays an essential role in the initiation and regulation of chromosomal replication. ATP-DnaA binds to the origin of replication (oriC) to initiate formation of the DNA replication initiation complex once per cell cycle. Binds the DnaA box (a 9 base pair repeat at the origin) and separates the double-stranded (ds)DNA. Forms a right-handed helical filament on oriC DNA; dsDNA binds to the exterior of the filament while single-stranded (ss)DNA is stabiized in the filament's interior. The ATP-DnaA-oriC complex binds and stabilizes one strand of the AT-rich DNA unwinding element (DUE), permitting loading of DNA polymerase. After initiation quickly degrades to an ADP-DnaA complex that is not apt for DNA replication. Binds acidic phospholipids. The chain is Chromosomal replication initiator protein DnaA from Borrelia turicatae (strain 91E135).